We begin with the raw amino-acid sequence, 92 residues long: MTKRTKKARIVGKYGTRYGASLRKQIKKMEVSQHNKYFCEFCGKYSVKRKVVGIWGCKDCGKVKAGGAYTMNTASAVTVRSTIRRLREQTES.

The C4-type zinc finger occupies Cys-39–Cys-60.

It belongs to the eukaryotic ribosomal protein eL43 family.

This is Large ribosomal subunit protein eL43z (RPL37AB) from Arabidopsis thaliana (Mouse-ear cress).